The chain runs to 701 residues: ABC transporter G family member 23 (701 aa).

The 231-residue stretch at 7–237 (INLNNVSRSY…YECSLLEDVY (231 aa)) folds into the ABC transporter domain. Residue 39 to 46 (GSSGSGKT) participates in ATP binding. 6 helical membrane-spanning segments follow: residues 335-355 (FPLV…FLAI), 493-513 (FLAP…FLSI), 541-561 (HILA…LIAV), 574-596 (LIYL…ISLI), 608-628 (LAIF…EAII), and 665-685 (LIII…STPI). The region spanning 459-686 (FQKAFNKIAN…SLIVISTPIG (228 aa)) is the ABC transmembrane type-2 domain.

This sequence belongs to the ABC transporter superfamily. ABCG family.

It is found in the membrane. The polypeptide is ABC transporter G family member 23 (abcG23) (Dictyostelium discoideum (Social amoeba)).